The following is a 104-amino-acid chain: MTKSELIEILTKRQAHLKSDDVDLAVKSLLEMMGGALSEGDRIEIRGFGSFSLHYRPPRCGRNPKTGESVALPGKYVPHFKPGKELRERVASVVPLAECGDITE.

It belongs to the bacterial histone-like protein family. In terms of assembly, heterodimer of an alpha and a beta chain.

This protein is one of the two subunits of integration host factor, a specific DNA-binding protein that functions in genetic recombination as well as in transcriptional and translational control. This chain is Integration host factor subunit beta (ihfB), found in Xylella fastidiosa (strain 9a5c).